The sequence spans 545 residues: MGSTDTDIEELENATYKYLIGEQTEKMWQRLKGILRCLVKQLEKGDVNVVDLKKNIEYAASVLEAVYIDETRRLLDTEDELSDIQTDSVPSEVRDWLASTFTRKMGMMKKKPEEKPKFRSIVHAVQAGIFVERMYRKNYHMVGLTYPAAVIVTLKEVDKWSFDVFALNEASGEHSLKFMIYELFTRYDLINRFKIPVSCLIAFAEALEVGYSKHKNPYHNLVHAADVTQTVHYIMLHTGIMHWLTELEILAMVFAAAIHDYEHTGTTNNFHIQTRSDVAILYNDRSVLENHHVSAAYRLMQEEEMNILVNLSKDDWRDLRNLVIEMVLATDMSGHFQQIKNIRNSLQQPEGIDRAKTMSLILHAADISHPAKTWKLHYRWTMALMEEFFLQGDKEAELGLPFSPLCDRKSTMVAQSQIGFIDFIVEPTFSLLTDSTEKIVIPLIEEASKSQSSNYGASSSSTMIGFHVADSLRRSNTKGSVCDGSYAPDYSLSAVDLKSFKNNLVDIIQQNKERWKELAAQGELDLHKNSEELGNTEEKHADTRP.

Calmodulin-binding regions lie at residues 24–44 (TEKM…QLEK) and 114–137 (EKPK…MYRK). One can recognise a PDEase domain in the interval 142–522 (VGLTYPAAVI…ERWKELAAQG (381 aa)). His-219 serves as the catalytic Proton donor. His-223, His-259, Asp-260, and Asp-366 together coordinate Zn(2+). Asp-260 lines the Mg(2+) pocket. The segment at 526–545 (LHKNSEELGNTEEKHADTRP) is disordered.

It belongs to the cyclic nucleotide phosphodiesterase family. PDE1 subfamily. In terms of assembly, homodimer. Interacts with YWHAZ. Zn(2+) is required as a cofactor. It depends on Mg(2+) as a cofactor. In terms of tissue distribution, expressed in brain, kidney and testis.

The protein resides in the cell projection. Its subcellular location is the cilium. It localises to the flagellum. It carries out the reaction a nucleoside 3',5'-cyclic phosphate + H2O = a nucleoside 5'-phosphate + H(+). It catalyses the reaction 3',5'-cyclic GMP + H2O = GMP + H(+). The catalysed reaction is 3',5'-cyclic AMP + H2O = AMP + H(+). With respect to regulation, type I PDE are activated by the binding of calmodulin in the presence of Ca(2+). Its activity is regulated as follows. Activated by the binding of calmodulin in the presence of Ca(2+). In terms of biological role, calcium/calmodulin-dependent cyclic nucleotide phosphodiesterase with a dual specificity for the second messengers cGMP and cAMP, which are key regulators of many important physiological processes. Has a higher efficiency with cGMP compared to cAMP. The sequence is that of Dual specificity calcium/calmodulin-dependent 3',5'-cyclic nucleotide phosphodiesterase 1A from Mus musculus (Mouse).